The primary structure comprises 2205 residues: MGAQVSSQKVGAHENSNRAYGGSTINYTTINYYRDSASNAASKQDFAQDPSKFTEPIKDVLIKTAPTLNSPNIEACGYSDRVMQLTLGNSTITTQEAANSVVAYGRWPEYIKDSEANPVDQPTEPDVAACRFYTLDTVTWRKESRGWWWKLPDALKDMGLFGQNMFYHYLGRASYTVHVQCNASKFHQGALGVFAVPEMCLAGDSATHMLTKYENANPGEKGGEFKGSFTLDTNATNPARNFCPVDYLFGSGVLAGNAFVYPHQIINLRTNNCATLVLPYVNSLSIDSMTKHNNWGIAILPLAPLDFATESSTEIPITLTIAPMCCEFNGLRNITVPRTQGLPVLNTPGSNQYLTADNYQSPCAIPEFDVTPPIDIPGEVRNMMELAEIDTMIPLNLTSQRKNTMDMYRVELNDAAHSDTPILCLSLSPASDPRLAHTMLGEILNYYTHWAGSLKFTFLFCGSMMATGKLLVSYAPPGAKAPESRKEAMLGTHVIWDIGLQSSCTMVVPWISNTTYRQTINDSFTEGGYISMFYQTRVVVPLSTPRKMDILGFVSACNDFSVRLLRDTTHISQEVMPQGLGDLIEGVVEGVTRNALTPLTPVNNLPDTRSSGPAHSKETPALTAVETGATNPLVPSDTVQTRHVIQKRTRSESTVESFFARGACVAIIEVDNDAPTRRASKLFSVWKITYKDTVQLRRKLEFFTYSRFDMEFTFVVTSNYTDANNGHALNQVYQIMYIPPGAPIPGKRNDYTWQTSSNPSVFYTYGAPPARISVPYVGIANAYSHFYDGFAKVPLAGQASTEGDSLYGAASLNDFGSLAVRVVNDHNPTKLTSKIRVYMKPKHVRVWCPRPPRAVPYYGPGVDYKDGLTPLPEKGLITYGFGHQNKAVYTAGYKICNYHLATQEDLQNAINIMWIRDLLVVESKAQGIDSIARCNCHTGVYYCESRRKYYPVSFVGPTFQYMEANEYYPARYQSHMLIGHGFASPGDCGGILRCQHGVIGIITAGGEGLVAFSDIRDLYAYEVEAMEQGVSNYIESLGAAFGSGFTQQIGNKISELTSMVTSTITEKLLKNLIKIISSLVIITRNYEDTTTVLATLALLGCDASPWQWLKKKACDILEIPYIMRQGDSWLKKFTEACNAAKGLEWVSNKISKFIDWLKEKIIPQARDKLEFVTKLKQLEMLENQIATIHQSCPSQEHQEILFNNVRWLSIQSRRFAPLYAVEAKRIQKLEHTINNYVQFKSKHRIEPVCLLVHGSPGTGKSVATNLIARAIAEKENTSTYSLPPDPSHFDGYKQQGVVIMDDLNQNPDGADMKLFCQMVSTVEFIPPMASLEEKGILFTSNYVLASTNSSRITPPTVAHSDALARRFAFDMDIQIMSEYSRDGKLNMAMATEMCKNCHQPANFKRCCPLVCGKAIQLMDKSSRVRYSIDQITTMIINERNRRSSIGNCMEALFQSPLQYKDLKIDIKTTPPPECINDLLHAVDSQEVRDYCEKKGWIADITSQVQTERNINRAMTILQAVTTFAAVAGVVYVMYKLFAGHQGAYTGLPNKRPNVPTIRTAKVQGPGFDYAVAMAKRNILTATTIKGEFTMLGVHDNVAILPTHASPGETIVIDGKEVEVLDAKALEDQAGTNLEITIVTLKRNEKFRDIRPHIPTQITETNDGVLIVNTSKYPNMYVPVGAVTEQGYLNLGGRQTARTLMYNFPTRAGQCGGVITCTGKVIGMHVGGNGSHGFAAALKRSYFTQSQGEIQWMRPSKEVGYPVINAPSKTKLEPSAFHYVFEGVKEPAVLTKSDPRLKTDFEEAIFSKYVGNKITEVDEYMKEAVDHYAGQLMSLDINTEQMCLEDAMYGTDGLEALDLSTSAGYPYVAMGKKKRDILNKQTRDTKEMQRLLDTYGINLPLVTYVKDELRSKTKVEQGKSRLIEASSLNDSVAMRMAFGNLYAAFHKNPGVVTGSAVGCDPDLFWSKIPVLMEEKLFDYTGYDASLSPAWFEALKMVLEKIGFGDRVDYIDYLNHSHHLYKNKTYCVKGGMPSGCSGTSIFNSMINNLIIRTLLLKTYKGIDLDHLKMIAYGDDVIASYPHEVDASLLAQSGKDYGLTMTPADKSATFETVTWENVTFLKRFFRADEKYPFLVHPVMPMKEIHESIRWTKDPRNTQDHVRSLCLLAWHSGEEEYNKFLAKIRSVPIGRALLLPEYSTLYRRWLDSF.

G2 is lipidated: N-myristoyl glycine; by host. At 2–1518 (GAQVSSQKVG…NINRAMTILQ (1517 aa)) the chain is on the cytoplasmic side. The tract at residues 579–599 (GLGDLIEGVVEGVTRNALTPL) is amphipathic alpha-helix. Residues 598 to 613 (PLTPVNNLPDTRSSGP) show a composition bias toward polar residues. Residues 598 to 619 (PLTPVNNLPDTRSSGPAHSKET) form a disordered region. Residues H899 and D917 each act as for protease 2A activity in the active site. Zn(2+)-binding residues include C934 and C936. The For protease 2A activity role is filled by C988. Zn(2+) contacts are provided by C994 and H996. The membrane-binding stretch occupies residues 1126-1198 (GDSWLKKFTE…HQSCPSQEHQ (73 aa)). The segment at 1126-1264 (GDSWLKKFTE…SPGTGKSVAT (139 aa)) is oligomerization. The segment at 1147–1151 (SNKIS) is RNA-binding. In terms of domain architecture, SF3 helicase spans 1230–1386 (EHTINNYVQF…SEYSRDGKLN (157 aa)). 1254–1261 (GSPGTGKS) contacts ATP. Zn(2+) is bound by residues C1394, C1397, C1406, and C1411. The C4-type zinc finger occupies 1394 to 1411 (CKNCHQPANFKRCCPLVC). The RNA-binding stretch occupies residues 1438–1445 (ERNRRSSI). The tract at residues 1449 to 1454 (MEALFQ) is oligomerization. The stretch at 1519–1534 (AVTTFAAVAGVVYVMY) is an intramembrane region. Over 1535 to 2205 (KLFAGHQGAY…TLYRRWLDSF (671 aa)) the chain is Cytoplasmic. Y1544 carries the O-(5'-phospho-RNA)-tyrosine modification. Positions 1564–1742 (GPGFDYAVAM…FAAALKRSYF (179 aa)) constitute a Peptidase C3 domain. Catalysis depends on for protease 3C activity residues H1603, E1634, and C1710. In terms of domain architecture, RdRp catalytic spans 1971–2086 (MEEKLFDYTG…SYPHEVDASL (116 aa)). Mg(2+) is bound by residues D1977 and D2072.

The protein belongs to the picornaviruses polyprotein family. In terms of assembly, interacts with capsid protein VP1 and capsid protein VP3 to form heterotrimeric protomers. As to quaternary structure, interacts with capsid protein VP0, and capsid protein VP3 to form heterotrimeric protomers. Interacts with human PVR. Five protomers subsequently associate to form pentamers which serve as building blocks for the capsid. Interacts with capsid protein VP2, capsid protein VP3 and capsid protein VP4 following cleavage of capsid protein VP0. Interacts with capsid protein VP1 and capsid protein VP3 in the mature capsid. In terms of assembly, interacts with capsid protein VP0 and capsid protein VP1 to form heterotrimeric protomers. Five protomers subsequently associate to form pentamers which serve as building blocks for the capsid. Interacts with capsid protein VP4 in the mature capsid. Interacts with protein 2C; this interaction may be important for virion morphogenesis. As to quaternary structure, interacts with capsid protein VP1 and capsid protein VP3. Homodimer. In terms of assembly, homohexamer; forms a hexameric ring structure with 6-fold symmetry characteristic of AAA+ ATPases. Interacts (via N-terminus) with host RTN3 (via reticulon domain); this interaction is important for viral replication. Interacts with capsid protein VP3; this interaction may be important for virion morphogenesis. As to quaternary structure, interacts with protein 3CD. Homodimer. Interacts with host GBF1. Interacts (via GOLD domain) with host ACBD3 (via GOLD domain); this interaction allows the formation of a viral protein 3A/ACBD3 heterotetramer with a 2:2 stoichiometry, which will stimulate the recruitment of host PI4KB in order to synthesize PI4P at the viral RNA replication sites. In terms of assembly, interacts with RNA-directed RNA polymerase. As to quaternary structure, interacts with protein 3AB and with RNA-directed RNA polymerase. Interacts with Viral protein genome-linked and with protein 3CD. Mg(2+) is required as a cofactor. Specific enzymatic cleavages in vivo by the viral proteases yield processing intermediates and the mature proteins. In terms of processing, myristoylation is required for the formation of pentamers during virus assembly. Further assembly of 12 pentamers and a molecule of genomic RNA generates the provirion. Post-translationally, during virion maturation, immature virions are rendered infectious following cleavage of VP0 into VP4 and VP2. This maturation seems to be an autocatalytic event triggered by the presence of RNA in the capsid and it is followed by a conformational change infectious virion. Myristoylation is required during RNA encapsidation and formation of the mature virus particle. In terms of processing, VPg is uridylylated by the polymerase into VPg-pUpU. This acts as a nucleotide-peptide primer for the genomic RNA replication.

It is found in the virion. It localises to the host cytoplasm. Its subcellular location is the host cytoplasmic vesicle membrane. The protein localises to the host nucleus. The catalysed reaction is a ribonucleoside 5'-triphosphate + H2O = a ribonucleoside 5'-diphosphate + phosphate + H(+). It catalyses the reaction Selective cleavage of Tyr-|-Gly bond in the picornavirus polyprotein.. The enzyme catalyses RNA(n) + a ribonucleoside 5'-triphosphate = RNA(n+1) + diphosphate. It carries out the reaction Selective cleavage of Gln-|-Gly bond in the poliovirus polyprotein. In other picornavirus reactions Glu may be substituted for Gln, and Ser or Thr for Gly.. Its activity is regulated as follows. Replication or transcription is subject to high level of random mutations by the nucleotide analog ribavirin. In terms of biological role, forms an icosahedral capsid of pseudo T=3 symmetry with capsid proteins VP2 and VP3. The capsid is 300 Angstroms in diameter, composed of 60 copies of each capsid protein and enclosing the viral positive strand RNA genome. Capsid protein VP1 mainly forms the vertices of the capsid. Capsid protein VP1 interacts with host cell receptor PVR to provide virion attachment to target host cells. This attachment induces virion internalization predominantly through clathrin- and caveolin-independent endocytosis in Hela cells and through caveolin-mediated endocytosis in brain microvascular endothelial cells. Tyrosine kinases are probably involved in the entry process. Virus binding to PVR induces increased junctional permeability and rearrangement of junctional proteins. Modulation of endothelial tight junctions, as well as cytolytic infection of endothelial cells themselves, may result in loss of endothelial integrity which may help the virus to reach the CNS. After binding to its receptor, the capsid undergoes conformational changes. Capsid protein VP1 N-terminus (that contains an amphipathic alpha-helix) and capsid protein VP4 are externalized. Together, they shape a pore in the host membrane through which viral genome is translocated to host cell cytoplasm. Its function is as follows. Forms an icosahedral capsid of pseudo T=3 symmetry with capsid proteins VP2 and VP3. The capsid is 300 Angstroms in diameter, composed of 60 copies of each capsid protein and enclosing the viral positive strand RNA genome. Functionally, lies on the inner surface of the capsid shell. After binding to the host receptor, the capsid undergoes conformational changes. Capsid protein VP4 is released, Capsid protein VP1 N-terminus is externalized, and together, they shape a pore in the host membrane through which the viral genome is translocated into the host cell cytoplasm. Component of immature procapsids, which is cleaved into capsid proteins VP4 and VP2 after maturation. Allows the capsid to remain inactive before the maturation step. In terms of biological role, cysteine protease that cleaves viral polyprotein and specific host proteins. It is responsible for the autocatalytic cleavage between the P1 and P2 regions, which is the first cleavage occurring in the polyprotein. Also cleaves the host translation initiation factor EIF4G1, in order to shut down the capped cellular mRNA translation. Inhibits the host nucleus-cytoplasm protein and RNA trafficking by cleaving host members of the nuclear pores including NUP98, NUP62 and NUP153. Counteracts stress granule formation probably by antagonizing its assembly or promoting its dissassembly. Cleaves and inhibits host IFIH1/MDA5, thereby inhibiting the type-I IFN production and the establishment of the antiviral state. Cleaves and inhibits host MAVS, thereby inhibiting the type-I IFN production and the establishment of the antiviral state. Its function is as follows. Plays an essential role in the virus replication cycle by acting as a viroporin. Creates a pore in the host endoplasmic reticulum and as a consequence releases Ca2+ in the cytoplasm of infected cell. In turn, high levels of cytoplasmic calcium may trigger membrane trafficking and transport of viral ER-associated proteins to viroplasms, sites of viral genome replication. Functionally, induces and associates with structural rearrangements of intracellular membranes. Displays RNA-binding, nucleotide binding and NTPase activities. May play a role in virion morphogenesis and viral RNA encapsidation by interacting with the capsid protein VP3. Localizes the viral replication complex to the surface of membranous vesicles. Together with protein 3CD binds the Cis-Active RNA Element (CRE) which is involved in RNA synthesis initiation. Acts as a cofactor to stimulate the activity of 3D polymerase, maybe through a nucleid acid chaperone activity. In terms of biological role, localizes the viral replication complex to the surface of membranous vesicles. It inhibits host cell endoplasmic reticulum-to-Golgi apparatus transport and causes the disassembly of the Golgi complex, possibly through GBF1 interaction. This would result in depletion of MHC, trail receptors and IFN receptors at the host cell surface. Plays an essential role in viral RNA replication by recruiting ACBD3 and PI4KB at the viral replication sites, thereby allowing the formation of the rearranged membranous structures where viral replication takes place. Its function is as follows. Acts as a primer for viral RNA replication and remains covalently bound to viral genomic RNA. VPg is uridylylated prior to priming replication into VPg-pUpU. The oriI viral genomic sequence may act as a template for this. The VPg-pUpU is then used as primer on the genomic RNA poly(A) by the RNA-dependent RNA polymerase to replicate the viral genome. During genome replication, the VPg-RNA linkage is removed by the host TDP2, thereby accelerating replication. During the late stage of the replication cycle, host TDP2 is excluded from sites of viral RNA synthesis and encapsidation, allowing for the generation of progeny virions. Functionally, involved in the viral replication complex and viral polypeptide maturation. It exhibits protease activity with a specificity and catalytic efficiency that is different from protease 3C. Protein 3CD lacks polymerase activity. Protein 3CD binds to the 5'UTR of the viral genome. Major viral protease that mediates proteolytic processing of the polyprotein. Cleaves host EIF5B, contributing to host translation shutoff. Also cleaves host PABPC1, contributing to host translation shutoff. Cleaves host RIGI and thus contributes to the inhibition of type I interferon production. Cleaves host NLRP1, triggers host N-glycine-mediated degradation of the autoinhibitory NLRP1 N-terminal fragment. Inhibits the integrated stress response (ISR) in the infected cell by cleaving host G3BP1. Stress granule formation is thus inhibited, which allows protein synthesis and viral replication. In terms of biological role, replicates the viral genomic RNA on the surface of intracellular membranes. May form linear arrays of subunits that propagate along a strong head-to-tail interaction called interface-I. Covalently attaches UMP to a tyrosine of VPg, which is used to prime RNA synthesis. The positive stranded RNA genome is first replicated at virus induced membranous vesicles, creating a dsRNA genomic replication form. This dsRNA is then used as template to synthesize positive stranded RNA genomes. ss(+)RNA genomes are either translated, replicated or encapsidated. This chain is Genome polyprotein, found in Homo sapiens (Human).